The sequence spans 432 residues: Trigger factor (432 aa).

In terms of domain architecture, PPIase FKBP-type spans 161–246; that stretch reads EDRVTIDFTG…LKKVEERELP (86 aa).

Belongs to the FKBP-type PPIase family. Tig subfamily.

The protein localises to the cytoplasm. It catalyses the reaction [protein]-peptidylproline (omega=180) = [protein]-peptidylproline (omega=0). Involved in protein export. Acts as a chaperone by maintaining the newly synthesized protein in an open conformation. Functions as a peptidyl-prolyl cis-trans isomerase. The protein is Trigger factor of Klebsiella pneumoniae subsp. pneumoniae (strain ATCC 700721 / MGH 78578).